Here is a 536-residue protein sequence, read N- to C-terminus: L-ornithine N(5)-monooxygenase SIDA (536 aa).

A disordered region spans residues 1-25 (MSPHRETTGDESTTTTVPQNGTNGA). Residues 115–123 (EKQTRFAWH) and Gln134 each bind FAD. An L-ornithine-binding site is contributed by Lys139. Val200 is a binding site for FAD. Arg310 contributes to the NADP(+) binding site. Residues 324–327 (NSIF) and Asn354 contribute to the L-ornithine site. FAD is bound at residue 515-517 (TLL). Ser518 is an L-ornithine binding site.

Belongs to the lysine N(6)-hydroxylase/L-ornithine N(5)-oxygenase family. In terms of assembly, homotetramer. It depends on FAD as a cofactor.

The enzyme catalyses L-ornithine + NADH + O2 = N(5)-hydroxy-L-ornithine + NAD(+) + H2O. It catalyses the reaction L-ornithine + NADPH + O2 = N(5)-hydroxy-L-ornithine + NADP(+) + H2O. It participates in siderophore biosynthesis. In terms of biological role, L-ornithine N(5)-monooxygenase; part of the gene cluster that mediates the biosynthesis of at least 11 siderophores, including beauverichelin A, dimerumic acid (DA), Na-dimethyl coprogen (NADC), eleutherazine B, ferricrocin (FC), fusarinine A, fusarinine C (FsC), metachelin A, mevalonolactone, rhodotorulic acid (RA) and tenellin. This cocktail of siderophores for iron metabolism is essential for virulence, and more specifically for the fungal virulence in penetrating through the host cuticle. Siderophore synthesis is also involved in conidial germination under iron-deficient conditions. SIDA initiates the biosynthesis of these siderophores with the enzymatic hydroxylation of ornithine. SIDA is indispensable for the production of most siderophores including fusarinine C and ferricrocin but not mevalonolactone and eleutherazine B. However, SIDA mediates the metabolic interplay between synthesis of mevalonolactone and eleutherazine B and other siderophores. The protein is L-ornithine N(5)-monooxygenase SIDA of Beauveria bassiana (strain ARSEF 2860) (White muscardine disease fungus).